A 162-amino-acid chain; its full sequence is Xylulose kinase (162 aa).

Positions 16–39 are disordered; it reads GGHSATPRPATGPAGPAAHSGRHQ. Over residues 20–33 the composition is skewed to low complexity; the sequence is ATPRPATGPAGPAA.

The protein belongs to the FGGY kinase family.

The enzyme catalyses D-xylulose + ATP = D-xylulose 5-phosphate + ADP + H(+). Its function is as follows. Catalyzes the phosphorylation of D-xylulose to D-xylulose 5-phosphate. This chain is Xylulose kinase, found in Actinoplanes sp. (strain ATCC 31351 / 3876) (Ampullariella sp.).